The sequence spans 300 residues: NAD kinase (300 aa).

Catalysis depends on Asp75, which acts as the Proton acceptor. NAD(+) contacts are provided by residues 75-76 (DG), 149-150 (ND), Arg177, Asp179, 190-195 (TAYALS), Ala214, and Gln248.

Belongs to the NAD kinase family. The cofactor is a divalent metal cation.

The protein localises to the cytoplasm. It catalyses the reaction NAD(+) + ATP = ADP + NADP(+) + H(+). Functionally, involved in the regulation of the intracellular balance of NAD and NADP, and is a key enzyme in the biosynthesis of NADP. Catalyzes specifically the phosphorylation on 2'-hydroxyl of the adenosine moiety of NAD to yield NADP. This Burkholderia orbicola (strain MC0-3) protein is NAD kinase.